Here is a 159-residue protein sequence, read N- to C-terminus: Cyclic pyranopterin monophosphate synthase (159 aa).

Substrate-binding positions include 76–78 and 114–115; these read MCH and ME. Aspartate 129 is an active-site residue.

This sequence belongs to the MoaC family. Homohexamer; trimer of dimers.

The catalysed reaction is (8S)-3',8-cyclo-7,8-dihydroguanosine 5'-triphosphate = cyclic pyranopterin phosphate + diphosphate. It functions in the pathway cofactor biosynthesis; molybdopterin biosynthesis. Functionally, catalyzes the conversion of (8S)-3',8-cyclo-7,8-dihydroguanosine 5'-triphosphate to cyclic pyranopterin monophosphate (cPMP). This Natranaerobius thermophilus (strain ATCC BAA-1301 / DSM 18059 / JW/NM-WN-LF) protein is Cyclic pyranopterin monophosphate synthase.